The chain runs to 275 residues: NifU-like protein 5, mitochondrial (275 aa).

Residues 1–61 (MKGLTRLLNS…TNASRNCSRS (61 aa)) constitute a mitochondrion transit peptide.

The protein belongs to the NifU family.

The protein resides in the mitochondrion. Molecular scaffold for [Fe-S] cluster assembly of mitochondrial iron-sulfur proteins. This chain is NifU-like protein 5, mitochondrial (NIFU5), found in Arabidopsis thaliana (Mouse-ear cress).